Here is a 172-residue protein sequence, read N- to C-terminus: MSSSRARQSFATECENAINKQINVELQAAYDYMAFFTYFDRDDVSFPKAAEFFRKASHEEREHAEKLAKYQNKRVGRVQYSDINGPTKTEFSSLEDAMNTALGMEKAVSKSLLELHEVASKNNDPALADFIESEFLHEQEDAIKQFADYLTETQRVGKGLGEYLFDKLTLNE.

One can recognise a Ferritin-like diiron domain in the interval 8-157 (QSFATECENA…DYLTETQRVG (150 aa)). Fe cation-binding residues include Glu25, Glu60, His63, Glu105, and Gln139.

The protein belongs to the ferritin family. As to quaternary structure, oligomer of 24 subunits. The functional molecule forms a roughly spherical shell with a diameter of 12 nm and contains a central cavity into which the insoluble mineral iron core is deposited.

The catalysed reaction is 4 Fe(2+) + O2 + 4 H(+) = 4 Fe(3+) + 2 H2O. Stores iron in a soluble, non-toxic, readily available form. Important for iron homeostasis. Has ferroxidase activity. Iron is taken up in the ferrous form and deposited as ferric hydroxides after oxidation. The polypeptide is Ferritin-2 heavy chain (SCM-2) (Schistosoma mansoni (Blood fluke)).